Here is a 586-residue protein sequence, read N- to C-terminus: Transmembrane protease serine 13 (586 aa).

Disordered stretches follow at residues 1-115 (MERD…VTTS) and 131-157 (PIRS…LPKF). Residues 1 to 165 (MERDSHGNAS…KFTWREGQKQ (165 aa)) lie on the Cytoplasmic side of the membrane. A 1-1 repeat occupies 9-13 (ASPAR). The 13 X 5 AA repeats of A-S-P-A-[GLQR] stretch occupies residues 9–93 (ASPARTPSAG…ASPARASPAL (85 aa)). The 2-1; approximate repeat unit spans residues 14–18 (TPSAG). The segment covering 14 to 52 (TPSAGASPAQASPAGTPPGRASPAQASPAQASPAGTPPG) has biased composition (low complexity). Residues 14–68 (TPSAGASPAQASPAGTPPGRASPAQASPAQASPAGTPPGRASPAQASPAGTPPGR) are 4 X 5 AA repeats of T-P-P-G-R. 10 tandem repeats follow at residues 19–23 (ASPAQ), 24–28 (ASPAG), 29–33 (TPPGR), 34–38 (ASPAQ), 39–43 (ASPAQ), 44–48 (ASPAG), 49–53 (TPPGR), 54–58 (ASPAQ), 59–63 (ASPAG), and 64–68 (TPPGR). The stretch at 69 to 78 (ASPGRASPAQ) is one 1-9; approximate repeat. Composition is skewed to low complexity over residues 69–111 (ASPG…RSAS) and 133–144 (RSSPARSAPATR). Repeat copies occupy residues 79-83 (ASPAQ), 84-88 (ASPAR), and 89-93 (ASPAL). The helical; Signal-anchor for type II membrane protein transmembrane segment at 166–186 (LPLIGCVLLLIALVVSLIILF) threads the bilayer. The Extracellular segment spans residues 187–586 (QFWQGHTGIR…GGDPGGAPRL (400 aa)). Residues 195–325 (IRYKEQRESC…HCGLRAMTGR (131 aa)) form the SRCR domain. The LDL-receptor class A domain occupies 204-226 (CPKHAVRCDGVVDCKLKSDELGC). 3 disulfide bridges follow: Cys-250–Cys-314, Cys-263–Cys-317, and Cys-351–Cys-367. Asn-255 and Asn-292 each carry an N-linked (GlcNAc...) asparagine glycan. A Peptidase S1 domain is found at 326–559 (IVGGALASDS…VLPWIYSKME (234 aa)). The active-site Charge relay system is His-366. A glycan (N-linked (GlcNAc...) asparagine) is linked at Asn-405. Residue Asp-414 is the Charge relay system of the active site. An N-linked (GlcNAc...) asparagine glycan is attached at Asn-445. 3 cysteine pairs are disulfide-bonded: Cys-448–Cys-517, Cys-480–Cys-496, and Cys-507–Cys-535. Catalysis depends on Ser-511, which acts as the Charge relay system. A compositionally biased stretch (polar residues) spans 565–574 (QDTAPSRLGT). A disordered region spans residues 565–586 (QDTAPSRLGTSSGGDPGGAPRL). Gly residues predominate over residues 575–586 (SSGGDPGGAPRL).

It belongs to the peptidase S1 family. In terms of assembly, interacts with SPINT1/HAI-1; the interaction promotes the phosphorylation and cell membrane localization of TMPRSS13. Interacts with SPINT2/HAI-2; the interaction promotes the phosphorylation and cell membrane localization of TMPRSS13. In terms of processing, the inactive zymogen is post-translationally modified and then trafficked to the cell surface, whereby it undergoes autocatalytic cleavage resulting in an activated form that is released extracellularly. Phosphorylation is required for localization at the cell surface. Phosphorylation increases following inhibition of protease activity by SPINT2/HAI-2. Post-translationally, N-glycosylation of Asn-405 and Asn-445 is required for exit from the endoplasmic reticulum and trafficking to the cell surface. Also required for autocleavage of the zymogen, activation and secretion of the mature protein. As to expression, expressed in placenta. In terms of tissue distribution, predominantly expressed in lung, placenta, pancreas, and prostate. Expressed in lung, placenta, pancreas, and prostate. Weakly expressed in testis and peripheral blood lymphocytes.

It localises to the cell membrane. It is found in the secreted. The protein localises to the cytoplasm. Cleavage of HGF is inhibited by SPINT1/HAI-1 via the BPTI/Kunitz inhibitor 1 domain. Serine protease. Cleaves the proform of PRSS8/prostasin to form the active protein. Cleaves the proform of HGF to form the active protein which promotes MAPK signaling. Promotes the formation of the stratum corneum and subsequently the epidermal barrier in embryos. In Homo sapiens (Human), this protein is Transmembrane protease serine 13 (TMPRSS13).